Here is a 541-residue protein sequence, read N- to C-terminus: Calcium-dependent protein kinase 26 (541 aa).

The span at 1-11 (MGQCCTGGGKA) shows a compositional bias: gly residues. Residues 1–74 (MGQCCTGGGK…AGPIGEVLER (74 aa)) form a disordered region. Residue glycine 2 is the site of N-myristoyl glycine attachment. Low complexity predominate over residues 38–67 (AKQQPCSPAAKAAATEAAAAASSSKKPAGP). Positions 83 to 341 (YSIGKELGRG…AFQVLNHPWI (259 aa)) constitute a Protein kinase domain. Residues 89–97 (LGRGQFGVT) and lysine 112 contribute to the ATP site. The active-site Proton acceptor is the aspartate 207. The segment at 347-377 (APDVPLDNVVLNRLKQFRAMNQFKKAALRII) is autoinhibitory domain. 4 consecutive EF-hand domains span residues 384-419 (EEIKGLKEMFKNIDKDNSGTITLEELKNGLAKQGTK), 420-455 (FSDNEIEQLMEAADADGNGIIDYEEFVTATVHMNKM), 456-491 (DREEHLYTAFQYFDKDNSGYITKEELEQALKEQGLY), and 493-526 (ANEIKDVITDADSNNDGRIDYSEFVAMMRKGSGC). Residues aspartate 397, aspartate 399, serine 401, threonine 403, glutamate 408, aspartate 433, aspartate 435, asparagine 437, glutamate 444, aspartate 469, aspartate 471, serine 473, tyrosine 475, glutamate 480, aspartate 504, asparagine 506, aspartate 508, arginine 510, and glutamate 515 each contribute to the Ca(2+) site.

It belongs to the protein kinase superfamily. Ser/Thr protein kinase family. CDPK subfamily. In terms of tissue distribution, specifically expressed in heading panicles, spikelets and mature pollen grains. Not expressed in vegetative tissues.

Its subcellular location is the membrane. It catalyses the reaction L-seryl-[protein] + ATP = O-phospho-L-seryl-[protein] + ADP + H(+). It carries out the reaction L-threonyl-[protein] + ATP = O-phospho-L-threonyl-[protein] + ADP + H(+). Its activity is regulated as follows. Activated by calcium. Autophosphorylation may play an important role in the regulation of the kinase activity. In terms of biological role, may play a role in signal transduction pathways that involve calcium as a second messenger. The chain is Calcium-dependent protein kinase 26 from Oryza sativa subsp. japonica (Rice).